The chain runs to 156 residues: Ribosomal RNA large subunit methyltransferase H (156 aa).

S-adenosyl-L-methionine is bound by residues Leu73, Gly104, and Leu123–Phe128.

Belongs to the RNA methyltransferase RlmH family. In terms of assembly, homodimer.

Its subcellular location is the cytoplasm. It catalyses the reaction pseudouridine(1915) in 23S rRNA + S-adenosyl-L-methionine = N(3)-methylpseudouridine(1915) in 23S rRNA + S-adenosyl-L-homocysteine + H(+). In terms of biological role, specifically methylates the pseudouridine at position 1915 (m3Psi1915) in 23S rRNA. This is Ribosomal RNA large subunit methyltransferase H from Thioalkalivibrio sulfidiphilus (strain HL-EbGR7).